The following is a 132-amino-acid chain: 3-aminoacrylate deaminase RutC (132 aa).

Belongs to the RutC family.

It carries out the reaction (Z)-3-aminoacrylate + H2O + H(+) = 3-oxopropanoate + NH4(+). In terms of biological role, involved in pyrimidine catabolism. Catalyzes the deamination of 3-aminoacrylate to malonic semialdehyde, a reaction that can also occur spontaneously. RutC may facilitate the reaction and modulate the metabolic fitness, rather than catalyzing essential functions. This is 3-aminoacrylate deaminase RutC from Cronobacter turicensis (strain DSM 18703 / CCUG 55852 / LMG 23827 / z3032).